Here is a 488-residue protein sequence, read N- to C-terminus: 3-octaprenyl-4-hydroxybenzoate carboxy-lyase (488 aa).

Position 172 (asparagine 172) interacts with Mn(2+). Prenylated FMN-binding positions include 175–177, 189–191, and 194–195; these read IYR, RWL, and RG. Position 238 (glutamate 238) interacts with Mn(2+). The active-site Proton donor is the aspartate 287.

This sequence belongs to the UbiD family. Homohexamer. Requires prenylated FMN as cofactor. It depends on Mn(2+) as a cofactor.

The protein resides in the cell membrane. It carries out the reaction a 4-hydroxy-3-(all-trans-polyprenyl)benzoate + H(+) = a 2-(all-trans-polyprenyl)phenol + CO2. The protein operates within cofactor biosynthesis; ubiquinone biosynthesis. Catalyzes the decarboxylation of 3-octaprenyl-4-hydroxy benzoate to 2-octaprenylphenol, an intermediate step in ubiquinone biosynthesis. The protein is 3-octaprenyl-4-hydroxybenzoate carboxy-lyase of Pseudomonas putida (strain ATCC 47054 / DSM 6125 / CFBP 8728 / NCIMB 11950 / KT2440).